A 156-amino-acid chain; its full sequence is MSWSKVKYFFFDTPEEKEAAQYAYEKEQIEMKKQQEPPEQQDVPFTKVQPKQNVVSIETAKQSSKVVLLEPRTYSEAQGIADHLKGKRAVVINLQRMSTDQAVRIVDFLSGTVYAIGGDIQKLGPKTFMCTPENVDIVGAISELFGEEEETNIKRW.

The protein belongs to the SepF family. Homodimer. Interacts with FtsZ.

The protein localises to the cytoplasm. Cell division protein that is part of the divisome complex and is recruited early to the Z-ring. Probably stimulates Z-ring formation, perhaps through the cross-linking of FtsZ protofilaments. Its function overlaps with FtsA. The sequence is that of Cell division protein SepF from Bacillus cytotoxicus (strain DSM 22905 / CIP 110041 / 391-98 / NVH 391-98).